We begin with the raw amino-acid sequence, 514 residues long: LWamide neuropeptides (514 aa).

The N-terminal stretch at 1–22 (MALKCHLVLLAITLLLAQCSGS) is a signal peptide. The segment covering 23 to 53 (VDKKDSTTNHLDEKKTDSTEAHIVQETDALK) has biased composition (basic and acidic residues). A propeptide spanning residues 23 to 75 (VDKKDSTTNHLDEKKTDSTEAHIVQETDALKENSYLGAEEESKEEDKKRSAAP) is cleaved from the precursor. A disordered region spans residues 23-180 (VDKKDSTTNH…PGLWGRSADA (158 aa)). Tryptophan amide occurs at positions 81 and 90. Positions 93-97 (SADAG) are excised as a propeptide. Residues Trp102 and Trp111 each carry the tryptophan amide modification. Residues 114–118 (SADAG) constitute a propeptide that is removed on maturation. Residues Trp123 and Trp132 each carry the tryptophan amide modification. A propeptide spanning residues 135–139 (SADAG) is cleaved from the precursor. Residues Trp144 and Trp153 each carry the tryptophan amide modification. Residues 156 to 160 (SADAG) constitute a propeptide that is removed on maturation. Tryptophan amide is present on residues Trp165 and Trp174. The propeptide occupies 177–181 (SADAR). The residue at position 186 (Trp186) is a Tryptophan amide. Residues 190–199 (EIYALWGGKR) constitute a propeptide that is removed on maturation. A Tryptophan amide modification is found at Trp205. A propeptide spanning residues 208–212 (SADPG) is cleaved from the precursor. Trp217 carries the tryptophan amide modification. Positions 221–230 (ELVGLWGGKR) are excised as a propeptide. Tryptophan amide is present on Trp236. The propeptide occupies 239–243 (SAEAG). Trp248 and Trp257 each carry tryptophan amide. Positions 258–475 (GRSADPLQPG…GRSAGSGQLG (218 aa)) are disordered. The propeptide occupies 260 to 264 (SADPL). Trp269 and Trp278 each carry tryptophan amide. A propeptide spanning residues 281 to 284 (SADP) is cleaved from the precursor. A tryptophan amide mark is found at Trp290 and Trp299. A propeptide spanning residues 302–305 (SADP) is cleaved from the precursor. Tryptophan amide occurs at positions 311 and 320. A propeptide spanning residues 323–326 (SADP) is cleaved from the precursor. A tryptophan amide mark is found at Trp332 and Trp341. A propeptide spanning residues 344 to 347 (SADP) is cleaved from the precursor. Residue Trp353 is modified to Tryptophan amide. Positions 356 to 366 (SPGLWGRSADP) are excised as a propeptide. Trp372 carries the tryptophan amide modification. The propeptide occupies 376-387 (QNPGFWGRSADP). A tryptophan amide mark is found at Trp393 and Trp402. The propeptide occupies 405-408 (SADP). 2 positions are modified to tryptophan amide: Trp414 and Trp423. Positions 426–429 (SADP) are excised as a propeptide. Trp435 and Trp444 each carry tryptophan amide. A propeptide spanning residues 447 to 450 (SADP) is cleaved from the precursor. A tryptophan amide mark is found at Trp456 and Trp465. Residues 468-472 (SAGSG) constitute a propeptide that is removed on maturation. A tryptophan amide mark is found at Trp477 and Trp487. Residues 489 to 514 (RSAEPPQFEDLEDLKKKSAIPQPKGQ) form a disordered region. A propeptide spanning residues 490–514 (SAEPPQFEDLEDLKKKSAIPQPKGQ) is cleaved from the precursor.

Belongs to the LWamide neuropeptide family.

Its subcellular location is the secreted. In terms of biological role, metamorphosin A may be part of an internal signaling system involved in control of metamorphosis. The polypeptide is LWamide neuropeptides (Anthopleura elegantissima (Green aggregating anemone)).